We begin with the raw amino-acid sequence, 440 residues long: Enolase (440 aa).

Residues 120–189 form an igE-binding determinant region; sequence KAAAAEKRVP…TEAMRQGAEV (70 aa). 2 residues coordinate substrate: His159 and Glu168. Glu211 functions as the Proton donor in the catalytic mechanism. Residues Asp246, Glu297, and Asp324 each contribute to the Mg(2+) site. Substrate-binding residues include Glu297 and Asp324. The active-site Proton acceptor is the Lys349. Residues 376–379 and Lys400 each bind substrate; that span reads SHRS.

This sequence belongs to the enolase family. In terms of assembly, homodimer. Mg(2+) serves as cofactor.

It is found in the cytoplasm. The catalysed reaction is (2R)-2-phosphoglycerate = phosphoenolpyruvate + H2O. Its pathway is carbohydrate degradation; glycolysis; pyruvate from D-glyceraldehyde 3-phosphate: step 4/5. This is Enolase (ENO) from Davidiella tassiana (Mycosphaerella tassiana).